Reading from the N-terminus, the 363-residue chain is D-alanine--D-alanine ligase (363 aa).

One can recognise an ATP-grasp domain in the interval 148–353; it reads KKLLAAEGLP…YGTLVSTLIE (206 aa). 176-231 is an ATP binding site; it reads RERLGLPVFVKPARAGSSIGITKVDDWAALDTAIAAAREHDPKVIVEAGIVGREVE. 3 residues coordinate Mg(2+): Asp-308, Glu-320, and Asn-322.

It belongs to the D-alanine--D-alanine ligase family. The cofactor is Mg(2+). Mn(2+) is required as a cofactor.

It localises to the cytoplasm. The enzyme catalyses 2 D-alanine + ATP = D-alanyl-D-alanine + ADP + phosphate + H(+). It participates in cell wall biogenesis; peptidoglycan biosynthesis. Its function is as follows. Cell wall formation. The chain is D-alanine--D-alanine ligase from Nocardia farcinica (strain IFM 10152).